Here is a 281-residue protein sequence, read N- to C-terminus: Bifunctional protein FolD (281 aa).

NADP(+) contacts are provided by residues 165 to 167, Thr192, and Val233; that span reads GRG.

It belongs to the tetrahydrofolate dehydrogenase/cyclohydrolase family. Homodimer.

It catalyses the reaction (6R)-5,10-methylene-5,6,7,8-tetrahydrofolate + NADP(+) = (6R)-5,10-methenyltetrahydrofolate + NADPH. The catalysed reaction is (6R)-5,10-methenyltetrahydrofolate + H2O = (6R)-10-formyltetrahydrofolate + H(+). It participates in one-carbon metabolism; tetrahydrofolate interconversion. Functionally, catalyzes the oxidation of 5,10-methylenetetrahydrofolate to 5,10-methenyltetrahydrofolate and then the hydrolysis of 5,10-methenyltetrahydrofolate to 10-formyltetrahydrofolate. The chain is Bifunctional protein FolD from Mycobacterium avium (strain 104).